A 254-amino-acid chain; its full sequence is Gamma-glutamyl-gamma-aminobutyrate hydrolase (254 aa).

Residues 16–250 (RNRLKGHATQ…ITAWQHHIAE (235 aa)) form the Glutamine amidotransferase type-1 domain. Catalysis depends on C114, which acts as the Nucleophile. Residues H222 and E224 contribute to the active site.

It belongs to the peptidase C26 family.

The enzyme catalyses 4-(gamma-L-glutamylamino)butanoate + H2O = 4-aminobutanoate + L-glutamate. It participates in amine and polyamine degradation; putrescine degradation; 4-aminobutanoate from putrescine: step 4/4. Functionally, involved in the breakdown of putrescine via hydrolysis of the gamma-glutamyl linkage of gamma-glutamyl-gamma-aminobutyrate. The sequence is that of Gamma-glutamyl-gamma-aminobutyrate hydrolase (puuD) from Shigella flexneri.